A 715-amino-acid chain; its full sequence is L-type lectin-domain containing receptor kinase VIII.1 (715 aa).

The N-terminal stretch at 1-21 (MSLFLSFFISILLCFFNGATT) is a signal peptide. The tract at residues 22-247 (TQFDFSTLAI…IHSIEWWSFS (226 aa)) is legume-lectin like. At 22–317 (TQFDFSTLAI…SRFCKENPGT (296 aa)) the chain is on the extracellular side. Residues Asn-126 and Asn-195 are each glycosylated (N-linked (GlcNAc...) asparagine). Positions 255-296 (GSGSGSPPPRANLMNPKANSVKSPPPLASQPSSSAIPISSNT) are disordered. Residues 283–296 (SQPSSSAIPISSNT) show a composition bias toward low complexity. The helical transmembrane segment at 318 to 338 (IAGVVTAGAFFLALFAGALFW) threads the bilayer. Topologically, residues 339 to 715 (VYSKKFKRVE…IIRSDDDHLV (377 aa)) are cytoplasmic. In terms of domain architecture, Protein kinase spans 376–676 (FNESRIIGHG…MSFSTSHLLL (301 aa)). Residues 382 to 390 (IGHGAFGVV) and Lys-405 each bind ATP. Catalysis depends on Asp-500, which acts as the Proton acceptor.

The protein in the C-terminal section; belongs to the protein kinase superfamily. Ser/Thr protein kinase family. In the N-terminal section; belongs to the leguminous lectin family.

It localises to the cell membrane. It carries out the reaction L-seryl-[protein] + ATP = O-phospho-L-seryl-[protein] + ADP + H(+). The catalysed reaction is L-threonyl-[protein] + ATP = O-phospho-L-threonyl-[protein] + ADP + H(+). This Arabidopsis thaliana (Mouse-ear cress) protein is L-type lectin-domain containing receptor kinase VIII.1 (LECRK81).